Here is a 615-residue protein sequence, read N- to C-terminus: Ras association domain-containing protein 1 homolog (615 aa).

Disordered stretches follow at residues 1 to 29 (MLRS…PTYQ) and 69 to 89 (SDDE…QSIG). Residues 76–87 (TSSTSSPQSEQS) are compositionally biased toward low complexity. The Phorbol-ester/DAG-type zinc-finger motif lies at 164–214 (NHSFKTHSLLHPTWCDKCGDFIWGILKEALKCEHCNYTCHARCRDLVTLDC). A disordered region spans residues 249–268 (PAMSSSTGSDKENGNGNSAG). A compositionally biased stretch (polar residues) spans 251–268 (MSSSTGSDKENGNGNSAG). The Ras-associating domain maps to 396–496 (KTTSLRTITS…RALVLQENDT (101 aa)). The region spanning 498-545 (DILWDAFEIPELENFLRILGMEEKQYVFQTQQKYQQYRYHLDAELRQR) is the SARAH domain.

As to quaternary structure, interacts with rab-39 (GTP-bound form). Interacts (via SARAH domain) with cst-1; the interaction is required for the phosphorylation of cst-1. In terms of tissue distribution, expressed in the pharynx, epithelial cells, ciliated neurons in the head, body wall muscles, hypodermis, vulva, gonadal sheath cells, tail hypodermis and in coelomocytes. Expressed in the pharynx, neurons and vulva.

It is found in the cytoplasm. Its subcellular location is the cytoskeleton. In terms of biological role, involved in embryonic morphogenesis. Plays a role in the organization of apical filamentous actin in epithelial cells of the developing embryo. May play a role in let-60-mediated vulval development. May induce nuclear condensation. Positively regulates the oxidative stress response, and this may be in association with the small GTPase rab-39. Not required for muscle integrity. This chain is Ras association domain-containing protein 1 homolog, found in Caenorhabditis elegans.